The chain runs to 650 residues: Sterol O-acyltransferase 2 (650 aa).

The interval 41 to 79 (LTSSNNSCASEHEGEGEGEDERPATTSSAPTQNHSAGDV) is disordered. Residues 64 to 75 (ATTSSAPTQNHS) show a composition bias toward polar residues. Transmembrane regions (helical) follow at residues 223-243 (FSGLYVAFWMAIAFGAVKALI), 300-320 (TGWAFTSIYELLFVGFYMYLT), 412-432 (INVSNFFMFTMFPTLIYQIEY), 450-470 (IFGTIFLMMIDAQILMHPVAM), and 493-513 (LLVDIVPGFIVMYILDFYLIW). The FYXDWWN motif signature appears at 531-537 (FYGDWWN). Transmembrane regions (helical) follow at residues 575–595 (ATLMTFFLSSVVHELAMYVIF) and 630–650 (VIFWLGICMGPSVMCTLYLTF). The active site involves His587.

Belongs to the membrane-bound acyltransferase family. Sterol o-acyltransferase subfamily.

The protein localises to the endoplasmic reticulum membrane. Its function is as follows. Sterol O-acyltransferase that catalyzes the formation of stery esters. This chain is Sterol O-acyltransferase 2 (ARE2), found in Saccharomyces uvarum (strain ATCC 76518 / CBS 7001 / CLIB 283 / NBRC 10550 / MCYC 623 / NCYC 2669 / NRRL Y-11845) (Yeast).